The following is a 273-amino-acid chain: ATP synthase subunit delta (273 aa).

The interval 55-78 is disordered; the sequence is TDPAQSARPRPSSPSVSSAPRSAA. Low complexity predominate over residues 57 to 78; the sequence is PAQSARPRPSSPSVSSAPRSAA.

This sequence belongs to the ATPase delta chain family. F-type ATPases have 2 components, F(1) - the catalytic core - and F(0) - the membrane proton channel. F(1) has five subunits: alpha(3), beta(3), gamma(1), delta(1), epsilon(1). F(0) has three main subunits: a(1), b(2) and c(10-14). The alpha and beta chains form an alternating ring which encloses part of the gamma chain. F(1) is attached to F(0) by a central stalk formed by the gamma and epsilon chains, while a peripheral stalk is formed by the delta and b chains.

Its subcellular location is the cell membrane. Its function is as follows. F(1)F(0) ATP synthase produces ATP from ADP in the presence of a proton or sodium gradient. F-type ATPases consist of two structural domains, F(1) containing the extramembraneous catalytic core and F(0) containing the membrane proton channel, linked together by a central stalk and a peripheral stalk. During catalysis, ATP synthesis in the catalytic domain of F(1) is coupled via a rotary mechanism of the central stalk subunits to proton translocation. In terms of biological role, this protein is part of the stalk that links CF(0) to CF(1). It either transmits conformational changes from CF(0) to CF(1) or is implicated in proton conduction. This is ATP synthase subunit delta from Streptomyces lividans.